We begin with the raw amino-acid sequence, 200 residues long: ATP-dependent Clp protease proteolytic subunit (200 aa).

Serine 98 serves as the catalytic Nucleophile. Histidine 123 is a catalytic residue.

This sequence belongs to the peptidase S14 family. As to quaternary structure, fourteen ClpP subunits assemble into 2 heptameric rings which stack back to back to give a disk-like structure with a central cavity, resembling the structure of eukaryotic proteasomes.

It localises to the cytoplasm. The catalysed reaction is Hydrolysis of proteins to small peptides in the presence of ATP and magnesium. alpha-casein is the usual test substrate. In the absence of ATP, only oligopeptides shorter than five residues are hydrolyzed (such as succinyl-Leu-Tyr-|-NHMec, and Leu-Tyr-Leu-|-Tyr-Trp, in which cleavage of the -Tyr-|-Leu- and -Tyr-|-Trp bonds also occurs).. In terms of biological role, cleaves peptides in various proteins in a process that requires ATP hydrolysis. Has a chymotrypsin-like activity. Plays a major role in the degradation of misfolded proteins. This is ATP-dependent Clp protease proteolytic subunit from Ehrlichia canis (strain Jake).